Reading from the N-terminus, the 131-residue chain is QRFP-like peptide (131 aa).

Residues 1–25 form the signal peptide; sequence MGVRVMRSRICVIGLLVLMLTQSEA. Residues 26 to 94 constitute a propeptide that is removed on maturation; it reads YSFREKSWRT…DDGISPADKR (69 aa). The interval 48–131 is disordered; that stretch reads RRDGGDQAPS…RESRRSFGSD (84 aa). Polar residues predominate over residues 97–106; sequence MLQQLAQQLK. The residue at position 119 (phenylalanine 119) is a Phenylalanine amide. Over residues 120 to 131 the composition is skewed to basic and acidic residues; it reads GKRESRRSFGSD. The propeptide occupies 123 to 131; sequence ESRRSFGSD.

The protein belongs to the RFamide neuropeptide family.

The protein resides in the secreted. Ligand for the G-protein coupled receptor QRFPR. The protein is QRFP-like peptide of Branchiostoma floridae (Florida lancelet).